We begin with the raw amino-acid sequence, 88 residues long: Small ribosomal subunit protein bS16 (88 aa).

This sequence belongs to the bacterial ribosomal protein bS16 family.

The polypeptide is Small ribosomal subunit protein bS16 (Pelotomaculum thermopropionicum (strain DSM 13744 / JCM 10971 / SI)).